The chain runs to 317 residues: Annexin A13 (317 aa).

Gly2 carries N-myristoyl glycine lipidation. Annexin repeat units lie at residues 15–86 (FDAD…ALLD), 87–158 (RPNE…SLLQ), 170–242 (ELAG…TIVR), and 246–317 (DLEG…ALLH).

The protein belongs to the annexin family. In terms of assembly, monomer and homodimer. In terms of tissue distribution, detected on the tips of microvilli in small intestine (at protein level).

It localises to the apical cell membrane. Its subcellular location is the cell membrane. The protein resides in the cytoplasmic vesicle. Functionally, binds to membranes enriched in phosphatidylserine or phosphatidylglycerol in a calcium-dependent manner. Half-maximal membrane binding requires about 60 uM calcium. Does not bind to membranes that lack phospholipids with an acidic headgroup. The sequence is that of Annexin A13 (Anxa13) from Mus musculus (Mouse).